A 58-amino-acid chain; its full sequence is Small ribosomal subunit protein bS21 (58 aa).

Residues Ser30–Lys58 are disordered. Residues Glu31 to Ser42 show a composition bias toward basic and acidic residues. Over residues Val43 to Lys58 the composition is skewed to basic residues.

This sequence belongs to the bacterial ribosomal protein bS21 family.

The protein is Small ribosomal subunit protein bS21 of Clostridium perfringens (strain ATCC 13124 / DSM 756 / JCM 1290 / NCIMB 6125 / NCTC 8237 / Type A).